The primary structure comprises 138 residues: MPEKLQVLGSRKGLTPGLQHYTTVTVADNSGAKEAVIIGIYGYKGVLRRIPFANIADLVMVSVRKGTPEVRKQKFKAVIVRQRMPFRRPDGTWIAFEDNAVVIVNPDGTPKGTEIRGPIAKEAAERWPKVASIATMVI.

The protein belongs to the universal ribosomal protein uL14 family. As to quaternary structure, part of the 50S ribosomal subunit. Forms a cluster with proteins L3 and L24e, part of which may contact the 16S rRNA in 2 intersubunit bridges.

Binds to 23S rRNA. Forms part of two intersubunit bridges in the 70S ribosome. The chain is Large ribosomal subunit protein uL14 from Sulfurisphaera tokodaii (strain DSM 16993 / JCM 10545 / NBRC 100140 / 7) (Sulfolobus tokodaii).